The primary structure comprises 433 residues: Urokinase-type plasminogen activator (433 aa).

The first 20 residues, 1-20, serve as a signal peptide directing secretion; that stretch reads MKVWLASLFLCALVVKNSEG. The region spanning 28 to 64 is the EGF-like domain; the sequence is DESNCGCQNGGVCVSYKYFSRIRRCSCPRKFQGEHCE. 6 cysteine pairs are disulfide-bonded: C32–C40, C34–C52, C54–C63, C71–C152, C92–C134, and C123–C147. The interval 35–58 is binds urokinase plasminogen activator surface receptor; that stretch reads QNGGVCVSYKYFSRIRRCSCPRKF. Residues 71 to 152 form the Kringle domain; the sequence is CYHGNGDSYR…FVQECMVHDC (82 aa). The tract at residues 153 to 179 is connecting peptide; that stretch reads SLSKKPSSSVDQQGFQCGQKALRPRFK. A Phosphoserine modification is found at S159. Intrachain disulfides connect C169-C301, C211-C227, C219-C290, C315-C384, C347-C363, and C374-C402. Residues 180–426 enclose the Peptidase S1 domain; sequence IVGGEFTEVE…FLDWIQSHIG (247 aa). Active-site charge relay system residues include H226 and D277. Residue S378 is the Charge relay system of the active site.

It belongs to the peptidase S1 family. In terms of assembly, found in high and low molecular mass forms. Each consists of two chains, A and B. The high molecular mass form contains a long chain A which is cleaved to yield a short chain A. Forms heterodimer with SERPINA5. Binds LRP1B; binding is followed by internalization and degradation. Interacts with MRC2. Interacts with PLAUR. In complex with SERPINE1, interacts with PLAUR/uPAR. Interacts with SORL1 and LRP1, either alone or in complex with SERPINE1; these interactions are abolished in the presence of LRPAP1/RAP. The ternary complex composed of PLAUR-PLAU-PAI1 also interacts with SORLA. Produced as an inactive single-chain protein (pro-uPA or sc-uPA), is processed into the active disulfide-linked two-chain form of PLAU/uPA by a proteolytic event mediated, at least, by TMPRSS4.

The protein resides in the secreted. The enzyme catalyses Specific cleavage of Arg-|-Val bond in plasminogen to form plasmin.. Inhibited by SERPINA5. Inhibited by SERPINE1. Its function is as follows. Specifically cleaves the zymogen plasminogen to form the active enzyme plasmin. The protein is Urokinase-type plasminogen activator (Plau) of Mus musculus (Mouse).